The sequence spans 251 residues: Triosephosphate isomerase (251 aa).

9–11 (NWK) is a substrate binding site. Residue histidine 94 is the Electrophile of the active site. Glutamate 166 acts as the Proton acceptor in catalysis. Substrate-binding positions include glycine 172, serine 211, and 232 to 233 (GG).

Belongs to the triosephosphate isomerase family. Homodimer.

It is found in the cytoplasm. It carries out the reaction D-glyceraldehyde 3-phosphate = dihydroxyacetone phosphate. The protein operates within carbohydrate biosynthesis; gluconeogenesis. Its pathway is carbohydrate degradation; glycolysis; D-glyceraldehyde 3-phosphate from glycerone phosphate: step 1/1. In terms of biological role, involved in the gluconeogenesis. Catalyzes stereospecifically the conversion of dihydroxyacetone phosphate (DHAP) to D-glyceraldehyde-3-phosphate (G3P). The protein is Triosephosphate isomerase of Xanthomonas oryzae pv. oryzae (strain MAFF 311018).